The primary structure comprises 344 residues: Glycerol-3-phosphate dehydrogenase [NAD(P)+] (344 aa).

Residues Trp18, His38, and Lys115 each contribute to the NADPH site. Sn-glycerol 3-phosphate is bound by residues Lys115, Gly144, and Thr146. Position 148 (Ala148) interacts with NADPH. Residues Lys199, Asp252, Ser262, Arg263, and Asn264 each contribute to the sn-glycerol 3-phosphate site. Lys199 (proton acceptor) is an active-site residue. Arg263 provides a ligand contact to NADPH. Positions 288 and 290 each coordinate NADPH.

The protein belongs to the NAD-dependent glycerol-3-phosphate dehydrogenase family.

Its subcellular location is the cytoplasm. It catalyses the reaction sn-glycerol 3-phosphate + NAD(+) = dihydroxyacetone phosphate + NADH + H(+). The catalysed reaction is sn-glycerol 3-phosphate + NADP(+) = dihydroxyacetone phosphate + NADPH + H(+). Its pathway is membrane lipid metabolism; glycerophospholipid metabolism. Its function is as follows. Catalyzes the reduction of the glycolytic intermediate dihydroxyacetone phosphate (DHAP) to sn-glycerol 3-phosphate (G3P), the key precursor for phospholipid synthesis. This Hydrogenovibrio crunogenus (strain DSM 25203 / XCL-2) (Thiomicrospira crunogena) protein is Glycerol-3-phosphate dehydrogenase [NAD(P)+].